The sequence spans 200 residues: ATP-dependent Clp protease proteolytic subunit 1 (200 aa).

Ser-102 serves as the catalytic Nucleophile. His-127 is a catalytic residue.

Belongs to the peptidase S14 family. In terms of assembly, fourteen ClpP subunits assemble into 2 heptameric rings which stack back to back to give a disk-like structure with a central cavity, resembling the structure of eukaryotic proteasomes.

It is found in the cytoplasm. It carries out the reaction Hydrolysis of proteins to small peptides in the presence of ATP and magnesium. alpha-casein is the usual test substrate. In the absence of ATP, only oligopeptides shorter than five residues are hydrolyzed (such as succinyl-Leu-Tyr-|-NHMec, and Leu-Tyr-Leu-|-Tyr-Trp, in which cleavage of the -Tyr-|-Leu- and -Tyr-|-Trp bonds also occurs).. Cleaves peptides in various proteins in a process that requires ATP hydrolysis. Has a chymotrypsin-like activity. Plays a major role in the degradation of misfolded proteins. The protein is ATP-dependent Clp protease proteolytic subunit 1 of Bradyrhizobium diazoefficiens (strain JCM 10833 / BCRC 13528 / IAM 13628 / NBRC 14792 / USDA 110).